Reading from the N-terminus, the 504-residue chain is Maturase K (504 aa).

Belongs to the intron maturase 2 family. MatK subfamily.

It is found in the plastid. It localises to the chloroplast. Its function is as follows. Usually encoded in the trnK tRNA gene intron. Probably assists in splicing its own and other chloroplast group II introns. The sequence is that of Maturase K from Actinidia chinensis (Kiwi).